Consider the following 262-residue polypeptide: Sulfite reductase, dissimilatory-type subunit beta (262 aa).

Residues cysteine 151, cysteine 188, cysteine 189, cysteine 193, cysteine 231, cysteine 258, and cysteine 261 each coordinate [4Fe-4S] cluster. Residue cysteine 193 participates in siroheme binding.

As to quaternary structure, heterohexamer of two alpha, two beta and two gamma subunits. [4Fe-4S] cluster serves as cofactor. Requires siroheme as cofactor.

The catalysed reaction is [DsrC protein]-trisulfide + NAD(+) + 3 H2O = [DsrC protein]-dithiol + sulfite + NADH + 3 H(+). Its function is as follows. Catalyzes the reduction of sulfite to sulfide. This is the terminal oxidation reaction in sulfate respiration, a process catalyzed by the sulfate-reducing bacteria. This Megalodesulfovibrio gigas (strain ATCC 19364 / DSM 1382 / NCIMB 9332 / VKM B-1759) (Desulfovibrio gigas) protein is Sulfite reductase, dissimilatory-type subunit beta (dsrB).